Here is a 219-residue protein sequence, read N- to C-terminus: uncharacterized protein (219 aa).

2 helical membrane passes run 8–28 (MILF…TLSV) and 194–214 (GIPG…GLLF).

It localises to the cell membrane. This is an uncharacterized protein from Archaeoglobus fulgidus (strain ATCC 49558 / DSM 4304 / JCM 9628 / NBRC 100126 / VC-16).